The primary structure comprises 1913 residues: GREB1-like protein (1913 aa).

Acidic residues predominate over residues 86–96 (MEDDEDEEEMS). Disordered regions lie at residues 86-111 (MEDD…KPAP), 281-309 (NGTS…SPRP), 1097-1157 (EAER…TSSI), and 1179-1207 (DSLD…LAWS). The span at 289-301 (KSSSCSSTPSRPG) shows a compositional bias: low complexity. Over residues 1118 to 1157 (PQSNSSAVTGTSGSIMENGVSSSSTAGKPQQQLLTPTSSI) the composition is skewed to polar residues. Positions 1187–1200 (SSTTSKPSSSSSSS) are enriched in low complexity. The chain crosses the membrane as a helical span at residues 1832–1852 (GVFFSGLLLYLCDSFVGADLL).

It belongs to the GREB1 family. In terms of tissue distribution, expressed in the inner ear, with a high presence in the spiral ganglia, cochlear nerve bundles, and hair cells.

It is found in the membrane. Functionally, plays a major role in early metanephros and genital development. This is GREB1-like protein (Greb1l) from Mus musculus (Mouse).